We begin with the raw amino-acid sequence, 220 residues long: MADS-box protein AGL24 (220 aa).

An MADS-box domain is found at 1-61; the sequence is MAREKIRIKK…GKLFEFSSSR (61 aa). The K-box domain occupies 87 to 177; sequence LRLENCNLSR…RDKLETLERA (91 aa). Polar residues predominate over residues 190-200; that stretch reads SVTTNVSSYDS. Residues 190-220 form a disordered region; sequence SVTTNVSSYDSGTPLEDDSDTSLKLGLPSWE.

Interacts with IMK3/MRLK. Forms a homodimer and heterodimer with SOC1, AP1 and SVP through MADS-box domain. Interacts with the SEU-LUG corepressor complex when complexed to AP1. Interacts with AGL15 and AGL16. Phosphorylated by IMK3. Induced by vernalization. In terms of tissue distribution, mostly expressed in shoot apical meristems, including floral meristems. Also detected in stems, seedlings, leaves, flowers and siliques, and, to a lower extent, in roots.

The protein localises to the nucleus. Its subcellular location is the cytoplasm. Transcription activator that mediates floral transition in response to vernalization. Promotes inflorescence fate in apical meristems. Acts in a dosage-dependent manner. Probably involved in the transduction of RLK-mediated signaling (e.g. IMK3 pathway). Together with AP1 and SVP, controls the identity of the floral meristem and regulates expression of class B, C and E genes. When associated with SOC1, mediates effect of gibberellins on flowering under short-day conditions, and regulates the expression of LEAFY (LFY), which links floral induction and floral development. Confers inflorescence characteristics to floral primordia and early flowering. The polypeptide is MADS-box protein AGL24 (AGL24) (Arabidopsis thaliana (Mouse-ear cress)).